A 613-amino-acid polypeptide reads, in one-letter code: Phosphoinositide phospholipase C 6 (613 aa).

Positions 137 to 281 (QDMTAPLSHY…LLHRIIISTK (145 aa)) constitute a PI-PLC X-box domain. Catalysis depends on residues His152 and His198. A disordered region spans residues 288–349 (ESRNPIVKQK…ASEDQKPAYK (62 aa)). Residues 349–465 (KRLITIHAGK…GYVKKPNFLM (117 aa)) form the PI-PLC Y-box domain. In terms of domain architecture, C2 spans 466–595 (KKGFHDEVFD…PGIRSVPLYD (130 aa)).

The cofactor is Ca(2+). As to expression, expressed in leaves, flowers and siliques, but not in roots.

The protein resides in the cell membrane. The catalysed reaction is a 1,2-diacyl-sn-glycero-3-phospho-(1D-myo-inositol-4,5-bisphosphate) + H2O = 1D-myo-inositol 1,4,5-trisphosphate + a 1,2-diacyl-sn-glycerol + H(+). Functionally, the production of the second messenger molecules diacylglycerol (DAG) and inositol 1,4,5-trisphosphate (IP3) is mediated by activated phosphatidylinositol-specific phospholipase C enzymes. This Arabidopsis thaliana (Mouse-ear cress) protein is Phosphoinositide phospholipase C 6 (PLC6).